We begin with the raw amino-acid sequence, 109 residues long: Mitochondrial pyruvate carrier 2 (109 aa).

3 helical membrane-spanning segments follow: residues 19 to 35 (IHFWAPTFKWGISIANI), 51 to 67 (IAVTCTGMIWCRCSTII), and 74 to 90 (LFSVNVAMAATGIYQLT).

The protein belongs to the mitochondrial pyruvate carrier (MPC) (TC 2.A.105) family.

It localises to the mitochondrion inner membrane. Functionally, mediates the uptake of pyruvate into mitochondria. The chain is Mitochondrial pyruvate carrier 2 from Arabidopsis thaliana (Mouse-ear cress).